The following is a 463-amino-acid chain: Rubisco accumulation factor 1, chloroplastic (463 aa).

The span at 1-18 shows a compositional bias: low complexity; sequence MLSLSHPHPHPAASTTAP. The N-terminal 31 residues, 1 to 31, are a transit peptide targeting the chloroplast; the sequence is MLSLSHPHPHPAASTTAPRHQRTAPVWHRRR. The disordered stretch occupies residues 1-84; that stretch reads MLSLSHPHPH…PFHPPPSPLP (84 aa). The segment covering 19–33 has biased composition (basic residues); sequence RHQRTAPVWHRRRAS. Over residues 43 to 53 the composition is skewed to gly residues; it reads PGGGSTGGRGG. The segment at 83 to 275 is N-terminal alpha-helix; that stretch reads LPPSLRNLDL…SGRARVELEL (193 aa). A coiled-coil region spans residues 240–294; that stretch reads RQSREAIDVQDRVAELERALQVVETESGRARVELELERARRKAAGEEEVDEEGEE. The C-terminal beta sheet stretch occupies residues 305-450; the sequence is VTVVRLRYGE…AEVVIVVRPP (146 aa).

It belongs to the RAF family. Homotrimer. In terms of tissue distribution, expressed in bundle sheath.

Its subcellular location is the plastid. It is found in the chloroplast. Its function is as follows. Required for assembly or stability of RuBisCO. Acts at a postchaperonin step to fold and/or assemble the large subunit (LS) into RuBisCO. The protein is Rubisco accumulation factor 1, chloroplastic of Zea mays (Maize).